The chain runs to 486 residues: V-type proton ATPase subunit B1 (486 aa).

Position 2 is an N-acetylglycine (Gly2).

The protein belongs to the ATPase alpha/beta chains family. As to quaternary structure, V-ATPase is a heteromultimeric enzyme composed of a peripheral catalytic V1 complex (components A to H) attached to an integral membrane V0 proton pore complex (components: a, c, c'', d and e).

Its subcellular location is the vacuole membrane. Non-catalytic subunit of the peripheral V1 complex of vacuolar ATPase. V-ATPase is responsible for acidifying a variety of intracellular compartments in eukaryotic cells. The sequence is that of V-type proton ATPase subunit B1 (VHA-B1) from Arabidopsis thaliana (Mouse-ear cress).